A 377-amino-acid chain; its full sequence is MTTTTTTTMSTLPMVLVDEILSRVPITSLRSLRSTCKRWEAQSKTNLVGGKATARKSSYLGFILIGNKICSMKLDLNGGDDFVDTSVNQISAFDDFEISQLFHCDGLLLCVSNKHYYSNTVMVCNMYLGETRLIEHCCLLEGFDNFGSYAFGYDSSKNRNHKIFRKKLVSGGYEIYSFKSDSWKDLNVDLGESTELCELGSVSLKGNAYFSVITKHEEEELWENNLLCFDFTTESFGKFLSLPFDNVTAEEEFGIMVLSCVRDEHLAVLYQLDTLGIWISTEIEPNKVSWREFLQVDLYTLDGFPDAFTAGRFIVDEEKQVVVVFNEATEIDLNHGNAFIFGRDGYFTSFNVGDTPPQDFTSYVPSLASLQIEKTGG.

Residues 6 to 52 enclose the F-box domain; sequence TTTMSTLPMVLVDEILSRVPITSLRSLRSTCKRWEAQSKTNLVGGKA.

In Arabidopsis thaliana (Mouse-ear cress), this protein is Putative F-box protein At3g13830.